The sequence spans 106 residues: Gibberellin-regulated protein 12 (106 aa).

The signal sequence occupies residues 1–22 (MMKLIVVFVISSLLFATQFSNG).

The protein belongs to the GASA family. Post-translationally, six disulfide bonds may be present.

The protein localises to the secreted. Its function is as follows. Gibberellin-regulated protein that may function in hormonal controlled steps of development such as seed germination, flowering and seed maturation. This is Gibberellin-regulated protein 12 (GASA12) from Arabidopsis thaliana (Mouse-ear cress).